Reading from the N-terminus, the 346-residue chain is tRNA N6-adenosine threonylcarbamoyltransferase (346 aa).

Residues H117 and H121 each coordinate Fe cation. Substrate contacts are provided by residues 139 to 143, D172, G185, D189, and N278; that span reads QVSGG. D308 is a Fe cation binding site.

Belongs to the KAE1 / TsaD family. Requires Fe(2+) as cofactor.

It is found in the cytoplasm. The enzyme catalyses L-threonylcarbamoyladenylate + adenosine(37) in tRNA = N(6)-L-threonylcarbamoyladenosine(37) in tRNA + AMP + H(+). Its function is as follows. Required for the formation of a threonylcarbamoyl group on adenosine at position 37 (t(6)A37) in tRNAs that read codons beginning with adenine. Is involved in the transfer of the threonylcarbamoyl moiety of threonylcarbamoyl-AMP (TC-AMP) to the N6 group of A37, together with TsaE and TsaB. TsaD likely plays a direct catalytic role in this reaction. The protein is tRNA N6-adenosine threonylcarbamoyltransferase of Lactobacillus delbrueckii subsp. bulgaricus (strain ATCC 11842 / DSM 20081 / BCRC 10696 / JCM 1002 / NBRC 13953 / NCIMB 11778 / NCTC 12712 / WDCM 00102 / Lb 14).